The sequence spans 984 residues: Rhoptry neck protein 4 (984 aa).

Positions 1–26 (MAIKNTLTGSGLLVLLTLACGTTVQS) are cleaved as a signal peptide. Residues 24–300 (VQSSPPTPAP…TPIPASKGIY (277 aa)) are disordered. 2 stretches are compositionally biased toward polar residues: residues 66–85 (PQKT…NSKV) and 92–105 (SDTT…TSES). Asn-81 is a glycosylation site (N-linked (GlcNAc...) asparagine). Pro residues predominate over residues 106 to 117 (PPVPQLGTPPRP). Repeat unit 1 spans residues 129–172 (QPPTAAPRTSRSVDTGSGSDASTEQQAGGQKVVTPIPASKGIYP). The span at 135–156 (PRTSRSVDTGSGSDASTEQQAG) shows a compositional bias: polar residues. Basic residues predominate over residues 214 to 228 (TGRRRAKARNRKRHP). Residues 242–285 (QPPTTASRPSNGEGESQPPTAAPRTSRSVDTGSGSDASTEQQAG) are compositionally biased toward polar residues. Repeat unit 2 spans residues 258 to 301 (QPPTAAPRTSRSVDTGSGSDASTEQQAGGQKVVTPIPASKGIYP). N-linked (GlcNAc...) asparagine glycans are attached at residues Asn-390 and Asn-780. The segment at 882–984 (GPTVSDESRR…EESTSKTSEL (103 aa)) is disordered. The span at 892–901 (MIHPVRHRSR) shows a compositional bias: basic residues. Residues 902–914 (TAPSSEAASTAAE) show a composition bias toward low complexity. An N-linked (GlcNAc...) asparagine glycan is attached at Asn-925. A compositionally biased stretch (polar residues) spans 967 to 984 (LKQSDTLIEESTSKTSEL).

Its subcellular location is the secreted. The protein localises to the parasitophorous vacuole membrane. This is Rhoptry neck protein 4 (RON4) from Toxoplasma gondii.